The chain runs to 466 residues: Asparagine--tRNA ligase (466 aa).

Belongs to the class-II aminoacyl-tRNA synthetase family. Homodimer.

The protein resides in the cytoplasm. It catalyses the reaction tRNA(Asn) + L-asparagine + ATP = L-asparaginyl-tRNA(Asn) + AMP + diphosphate + H(+). In Yersinia pseudotuberculosis serotype O:1b (strain IP 31758), this protein is Asparagine--tRNA ligase.